A 718-amino-acid chain; its full sequence is MAEAEGESLESWLNKATNPSNRQEDWEYIIGFCDQINKELEGPQIAVRLLAHKIQSPQEWEAVQALTVLEACMKNCGRRLHNEVGKFRFLNELIKVVSPKYLGDRVSEKVKTKVIELLFSWTLALPEEAKIKDAYHMLKRQGIVQSDPPIPMDRTLIPSPPPRPKNPVFDDEEKSKLLARLLKSKNPDDLQEANRLIKSMVKEDEARIQKVTKRLHTLEEVNNNVKLLHEMLLHYSQEYSSDADKELMKELFDRCENKRRTLFKLASETEDNDNSLGDILQASDNLSRVINSYKTIIEGQIVNGEVTTSTMPDSEGNSHCGNQGALIDLAELDAPSNSSPALAPPTSGIPILPPPPQTSGPPRSRSSSQAEAPPGSDSTNNALSLLDEELLCLGLTDPAPTAPKESPGSSQWHLFQNEPPSDLDFFSPRPVPAASCPSDGPQLPPPVSTSSMSQAPLPAAFPAPVVPASAPTHSTGSFMFSSGPAPALAPKAEPKGPEYPSSSTSHRLDALDQLLEEAKVTSGLVKPVSCFSPGPTASPLLPASAPARPLLPFSTGPGSPLFQSQGSPQKGPELSLASVHVPLESIKPSSALPVTAYDKNGFRILFHFAKECPPGRPDVLVVVVSMLNTAPLPVKSIVLQAAVPKSMKVKLQPPSGTELSPFSPIQPPAAITQVMLLANPMKEKVRLRYKLTFALGEQLSTELGEVDQFPPVEQWGNL.

The 131-residue stretch at 16-146 folds into the VHS domain; it reads ATNPSNRQED…MLKRQGIVQS (131 aa). Residues serine 159 and serine 275 each carry the phosphoserine modification. The region spanning 171-298 is the GAT domain; that stretch reads DEEKSKLLAR…VINSYKTIIE (128 aa). The tract at residues 299–588 is unstructured hinge; the sequence is GQIVNGEVTT…VHVPLESIKP (290 aa). Low complexity-rich tracts occupy residues 334-350 and 360-369; these read APSN…SGIP and GPPRSRSSSQ. The disordered stretch occupies residues 334–381; that stretch reads APSNSSPALAPPTSGIPILPPPPQTSGPPRSRSSSQAEAPPGSDSTNN. The Autoinhibitory motif lies at 387-391; it reads DEELL. Disordered regions lie at residues 395 to 455 and 477 to 506; these read LTDP…MSQA and SFMF…STSH. The 122-residue stretch at 589-710 folds into the GAE domain; sequence SSALPVTAYD…TELGEVDQFP (122 aa).

The protein belongs to the GGA protein family. In terms of assembly, monomer. Interacts with GGA1 and GGA2. Binds to clathrin and activated ARFs, such as ARF1, ARF5 and ARF6. Binds RABEP1 and RABGEF1. Interacts with the membrane proteins M6PR/CD-MPR and IGF2R/CI-MPR and the accessory proteins SYNRG, EPN4, NECAP1, NECAP2 and AFTPH/aftiphilin. Interacts with TSG101 and UBC. Interacts with ADRA2B. Interacts with NTRK1; the interaction is independent of NTRK1 activation and ubiquitination. Interacts (via VHS domain) with BACE1 (via DXXLL motif). Post-translationally, phosphorylated by CK2 and dephosphorylated by PP2A. Phosphorylation of GGA3 allows the internal DXXLL motif to bind the VHS domain and to inhibit the recognition of cargo signals. In terms of processing, ubiquitinated. Proteolytically cleaved during apoptosis by CASP3.

It localises to the golgi apparatus. The protein localises to the trans-Golgi network membrane. It is found in the endosome membrane. The protein resides in the early endosome membrane. Its subcellular location is the recycling endosome membrane. Its function is as follows. Plays a role in protein sorting and trafficking between the trans-Golgi network (TGN) and endosomes. Mediates the ARF-dependent recruitment of clathrin to the TGN and binds ubiquitinated proteins and membrane cargo molecules with a cytosolic acidic cluster-dileucine (DXXLL) motif. In terms of biological role, plays a role in protein sorting and trafficking between the trans-Golgi network (TGN) and endosomes. Mediates the ARF-dependent recruitment of clathrin to the TGN and binds ubiquitinated proteins and membrane cargo molecules with a cytosolic acidic cluster-dileucine (DXXLL) motif. Mediates export of the GPCR receptor ADRA2B to the cell surface. Involved in BACE1 transport and sorting as well as regulation of BACE1 protein levels. Regulates retrograde transport of BACE1 from endosomes to the trans-Golgi network via interaction through the VHS motif and dependent of BACE1 phosphorylation. Modulates BACE1 protein levels independently of the interaction between VHS domain and DXXLL motif through recognition of ubiquitination. Key player in a novel DXXLL-mediated endosomal sorting machinery to the recycling pathway that targets NTRK1 to the plasma membrane. This is ADP-ribosylation factor-binding protein GGA3 (Gga3) from Mus musculus (Mouse).